The following is a 303-amino-acid chain: Methionine import ATP-binding protein MetN (303 aa).

In terms of domain architecture, ABC transporter spans 1–222; that stretch reads MLDQISLEIP…PDPKMRHFLG (222 aa). 19-26 lines the ATP pocket; the sequence is GHSGAGKS.

It belongs to the ABC transporter superfamily. Methionine importer (TC 3.A.1.24) family. The complex is composed of two ATP-binding proteins (MetN), two transmembrane proteins (MetI) and a solute-binding protein (MetQ).

The protein localises to the cell inner membrane. It carries out the reaction L-methionine(out) + ATP + H2O = L-methionine(in) + ADP + phosphate + H(+). It catalyses the reaction D-methionine(out) + ATP + H2O = D-methionine(in) + ADP + phosphate + H(+). Part of the ABC transporter complex MetNIQ involved in methionine import. Responsible for energy coupling to the transport system. The chain is Methionine import ATP-binding protein MetN from Wolinella succinogenes (strain ATCC 29543 / DSM 1740 / CCUG 13145 / JCM 31913 / LMG 7466 / NCTC 11488 / FDC 602W) (Vibrio succinogenes).